Reading from the N-terminus, the 65-residue chain is Photosystem II reaction center protein J (65 aa).

Residues 35–55 traverse the membrane as a helical segment; it reads LWLVATAGGIAVIFVLGIFFY.

This sequence belongs to the PsbJ family. PSII is composed of 1 copy each of membrane proteins PsbA, PsbB, PsbC, PsbD, PsbE, PsbF, PsbH, PsbI, PsbJ, PsbK, PsbL, PsbM, PsbT, PsbX, PsbY, Psb30/Ycf12, peripheral proteins PsbO, CyanoQ (PsbQ), PsbU, PsbV and a large number of cofactors. It forms dimeric complexes.

The protein localises to the cellular thylakoid membrane. Functionally, one of the components of the core complex of photosystem II (PSII). PSII is a light-driven water:plastoquinone oxidoreductase that uses light energy to abstract electrons from H(2)O, generating O(2) and a proton gradient subsequently used for ATP formation. It consists of a core antenna complex that captures photons, and an electron transfer chain that converts photonic excitation into a charge separation. The chain is Photosystem II reaction center protein J from Prochlorococcus marinus (strain MIT 9312).